We begin with the raw amino-acid sequence, 1834 residues long: Structure-specific endonuclease subunit SLX4 (1834 aa).

An interaction with SLX4IP, ERCC4/XPF and MSH2 region spans residues 1-669 (MKLSVNEAQL…QDKHPDRGGR (669 aa)). The segment at 24–49 (PGIDPRSSEDQPESLKTGQMMDESDE) is disordered. Residue K68 forms a Glycyl lysine isopeptide (Lys-Gly) (interchain with G-Cter in SUMO2) linkage. Positions 69-206 (EVSGERKTQK…VPSPSKPRTA (138 aa)) are disordered. Over residues 78–87 (KAASNGTQIR) the composition is skewed to polar residues. The segment covering 95-104 (QTATKTKTLQ) has biased composition (low complexity). 2 stretches are compositionally biased toward polar residues: residues 156–172 (TAQN…SPNL) and 180–204 (NVPN…SKPR). Position 169 is a phosphoserine (S169). The residue at position 287 (S287) is a Phosphoserine. K291 is covalently cross-linked (Glycyl lysine isopeptide (Lys-Gly) (interchain with G-Cter in SUMO2)). 2 consecutive UBZ4-type zinc fingers follow at residues 293 to 323 (LFFC…DEAE) and 333 to 361 (IPEC…VKME). Zn(2+) contacts are provided by C296, C299, H314, C318, C336, and C339. K347 is covalently cross-linked (Glycyl lysine isopeptide (Lys-Gly) (interchain with G-Cter in SUMO2)). Residues H352 and C356 each contribute to the Zn(2+) site. K359 participates in a covalent cross-link: Glycyl lysine isopeptide (Lys-Gly) (interchain with G-Cter in SUMO2). Residues 376-385 (AQPEGSSSPP) are compositionally biased toward polar residues. Disordered stretches follow at residues 376–417 (AQPE…DEAP), 452–471 (RPEA…PPLL), and 561–610 (QGLM…REHQ). Positions 395 to 411 (GLKRRGPTSKKEPRKRR) are enriched in basic residues. Glycyl lysine isopeptide (Lys-Gly) (interchain with G-Cter in SUMO2) cross-links involve residues K412 and K458. The span at 575-584 (EHSELSERRS) shows a compositional bias: basic and acidic residues. An interaction with PLK1 and TERF2-TERF2IP region spans residues 684-1834 (MVNNPHLSDV…PRGKKKVERN (1151 aa)). Positions 691–764 (SDVQFQTDSG…LYTADTGLPP (74 aa)) constitute a BTB domain. Residues 801 to 870 (EEKEAENCES…QRKLLQEERA (70 aa)) are a coiled coil. 2 disordered regions span residues 826 to 846 (EEEE…QENV) and 902 to 1151 (KVEE…EDEV). Residues K835, K902, and K970 each participate in a glycyl lysine isopeptide (Lys-Gly) (interchain with G-Cter in SUMO2) cross-link. 2 stretches are compositionally biased toward basic and acidic residues: residues 902–916 (KVEE…RDEA) and 965–979 (CQAE…HSDD). Positions 986-1002 (LFSSTQGEISEPSQITS) are enriched in polar residues. Residues 1011–1020 (VRERGLEVSH) show a composition bias toward basic and acidic residues. Residues S1028, S1044, and S1070 each carry the phosphoserine modification. Residues 1059 to 1073 (PRSRGGTSQVGSPTL) are compositionally biased toward polar residues. Glycyl lysine isopeptide (Lys-Gly) (interchain with G-Cter in SUMO2) cross-links involve residues K1081 and K1093. Residues 1094–1111 (EPGHQKGKERRSVLECRN) are compositionally biased toward basic and acidic residues. Glycyl lysine isopeptide (Lys-Gly) (interchain with G-Cter in SUMO2) cross-links involve residues K1112 and K1120. S1121 is modified (phosphoserine). The segment covering 1124 to 1133 (IDLTQSNPDH) has biased composition (polar residues). S1135 is modified (phosphoserine). Glycyl lysine isopeptide (Lys-Gly) (interchain with G-Cter in SUMO2) cross-links involve residues K1169, K1179, and K1180. Residue S1185 is modified to Phosphoserine. Disordered regions lie at residues 1195-1504 (IDVD…SRPS) and 1516-1564 (GEEQ…TPMP). 2 stretches are compositionally biased toward polar residues: residues 1245–1254 (PSEASTTDTS) and 1269–1279 (CSSQTQISSLR). The interaction with MUS81 stretch occupies residues 1328–1648 (VSPGTSDGRR…AGVHAQQEAT (321 aa)). Basic residues predominate over residues 1338 to 1350 (QGHRSPSRPHPGG). Residues 1351–1362 (HPHSSPLAPHPI) are compositionally biased toward low complexity. The segment covering 1394 to 1403 (EVGDSDDEQE) has biased composition (acidic residues). Positions 1457–1468 (RMNEAADSRDCR) are enriched in basic and acidic residues. Phosphoserine is present on residues S1464 and S1469. A compositionally biased stretch (polar residues) spans 1481-1504 (SCTTQRKLQEKSSGAGSLGNSRPS). Residues K1575 and K1576 each participate in a glycyl lysine isopeptide (Lys-Gly) (interchain with G-Cter in SUMO2) cross-link. The interval 1605-1746 (TLDSDSEDES…EGEVSASQAA (142 aa)) is disordered. S1610 is modified (phosphoserine). Positions 1632-1834 (QTYKPSRAGV…PRGKKKVERN (203 aa)) are interaction with SLX1. Positions 1654 to 1672 (HRPKGPAKTKGPRHQRKHH) are enriched in basic residues. Residue K1657 forms a Glycyl lysine isopeptide (Lys-Gly) (interchain with G-Cter in SUMO2) linkage. Over residues 1706–1730 (SVDGSDSSLSSQSSSSCEFGAAFES) the composition is skewed to low complexity.

This sequence belongs to the SLX4 family. In terms of assembly, forms a heterodimer with SLX1A/GIYD1. Interacts with ERCC4/XPF; catalytic subunit of the ERCC4-ERCC1 endonuclease. Interacts with MUS81; catalytic subunit of the MUS81-EME1 endonuclease. Interacts with MSH2; component of the MSH2-MSH3 mismatch repair complex. Interacts with TERF2-TERF2IP. Interacts with PLK1 and SLX4IP.

It is found in the nucleus. Its function is as follows. Regulatory subunit that interacts with and increases the activity of different structure-specific endonucleases. Has several distinct roles in protecting genome stability by resolving diverse forms of deleterious DNA structures originating from replication and recombination intermediates and from DNA damage. Component of the SLX1-SLX4 structure-specific endonuclease that resolves DNA secondary structures generated during DNA repair and recombination. Has endonuclease activity towards branched DNA substrates, introducing single-strand cuts in duplex DNA close to junctions with ss-DNA. Has a preference for 5'-flap structures, and promotes symmetrical cleavage of static and migrating Holliday junctions (HJs). Resolves HJs by generating two pairs of ligatable, nicked duplex products. Interacts with the structure-specific ERCC4-ERCC1 endonuclease and promotes the cleavage of bubble structures. Interacts with the structure-specific MUS81-EME1 endonuclease and promotes the cleavage of 3'-flap and replication fork-like structures. SLX4 is required for recovery from alkylation-induced DNA damage and is involved in the resolution of DNA double-strand breaks. The polypeptide is Structure-specific endonuclease subunit SLX4 (SLX4) (Homo sapiens (Human)).